The sequence spans 146 residues: Hemoglobin subunit beta (146 aa).

At valine 1 the chain carries N-acetylvaline. A Globin domain is found at 2-146; it reads HLTADEKAAV…VATALAHKYH (145 aa). Threonine 12 is modified (phosphothreonine). Serine 44 is modified (phosphoserine). Position 59 is an N6-acetyllysine (lysine 59). Histidine 63 provides a ligand contact to heme b. Lysine 82 bears the N6-acetyllysine mark. Histidine 92 lines the heme b pocket. Cysteine 93 is subject to S-nitrosocysteine. The residue at position 144 (lysine 144) is an N6-acetyllysine.

This sequence belongs to the globin family. As to quaternary structure, heterotetramer of two alpha chains and two beta chains. In terms of tissue distribution, red blood cells.

Functionally, involved in oxygen transport from the lung to the various peripheral tissues. The chain is Hemoglobin subunit beta (HBB) from Cephalopachus bancanus (Western tarsier).